Consider the following 198-residue polypeptide: Recombination protein RecR (198 aa).

The C4-type zinc finger occupies 56-71; it reads CTTCGNIDTHDPCAIC. One can recognise a Toprim domain in the interval 79 to 174; the sequence is RSLCVVEEVS…RLTQLAHGLP (96 aa).

The protein belongs to the RecR family.

In terms of biological role, may play a role in DNA repair. It seems to be involved in an RecBC-independent recombinational process of DNA repair. It may act with RecF and RecO. This Sphingopyxis alaskensis (strain DSM 13593 / LMG 18877 / RB2256) (Sphingomonas alaskensis) protein is Recombination protein RecR.